A 507-amino-acid polypeptide reads, in one-letter code: F-box only protein 31 (507 aa).

A disordered region spans residues 19-42 (RQQRRGPAETAAADSEADTDPEEE). Residue serine 33 is modified to Phosphoserine. Over residues 33–42 (SEADTDPEEE) the composition is skewed to acidic residues. Position 37 is a phosphothreonine (threonine 37). Positions 50 to 55 (RCSLLE) match the D box motif. The F-box domain maps to 50–96 (RCSLLELPPELLVEIFASLPGTDLPSLAQVCSRFRRILHTDTIWRRR). The Zn(2+) site is built by cysteine 192, histidine 200, cysteine 216, and histidine 222. Serine 264 bears the Phosphoserine; by ATM mark. Residues 283–285 (DDL) carry the DDL motif motif. The segment at 366–417 (EQEAGEGAAPPREPSAKAADGPPAKDGKEPGGGAEAAEQSASSGQGQPFVLP) is disordered. Positions 400-412 (EAAEQSASSGQGQ) are enriched in low complexity. Residue serine 448 is modified to Phosphoserine.

It belongs to the FBXO31 family. As to quaternary structure, part of a SCF (SKP1-cullin-F-box) protein ligase complex SCF(FBXO31) composed of CUL1, SKP1, RBX1 and FBXO31. Interacts (when phosphorylated at Ser-33) with CDC20, promoting ubiquitination by the APC/C complex. Phosphorylation at Ser-264 by ATM following gamma-irradiation results in its stabilization. Phosphorylation at Ser-448 in absence of stress promotes its ubiquitination and degradation by the SCF(FBXO46) complex. Phosphorylation at Ser-33 by AKT1 promotes association with CDC20 and ubiquitination by the APC/C complex. Post-translationally, ubiquitinated by the SCF(FBXO46) complex in absence of stress, promoting its degradation. Ubiquitinated by the APC/C complex following phosphorylation at Ser-33, leading to its degradation by the proteasome.

It localises to the cytoplasm. It is found in the cytoskeleton. The protein localises to the microtubule organizing center. The protein resides in the centrosome. The protein operates within protein modification; protein ubiquitination. Substrate-recognition component of the SCF(FBXO31) protein ligase complex, which specifically mediates the ubiquitination of proteins amidated at their C-terminus in response to oxidative stress, leading to their degradation by the proteasome. FBXO31 specifically recognizes and binds C-terminal peptides bearing an amide: C-terminal amidation in response to oxidative stress takes place following protein fragmentation. The SCF(FBXO31) also plays a role in G1 arrest following DNA damage by mediating ubiquitination of phosphorylated cyclin-D1 (CCND1), promoting its degradation by the proteasome, resulting in G1 arrest. The SCF(FBXO31) complex is however not a major regulator of CCND1 stability during the G1/S transition. In response to genotoxic stress, the SCF(FBXO31) complex directs ubiquitination and degradation of phosphorylated MDM2, thereby promoting p53/TP53-mediated DNA damage response. SCF(FBXO31) complex is required for genomic integrity by catalyzing ubiquitination and degradation of cyclin-A (CCNA1 and/or CCNA2) during the G1 phase. In response to genotoxic stress, the SCF(FBXO31) complex directs ubiquitination and degradation of phosphorylated FBXO46 and MAP2K6. SCF(FBXO31) complex promotes ubiquitination and degradation of CDT1 during the G2 phase to prevent re-replication. The SCF(FBXO31) complex also mediates ubiquitination and degradation of DUSP6, OGT and PARD6A. The chain is F-box only protein 31 from Mus musculus (Mouse).